Consider the following 503-residue polypeptide: Glutamate/gamma-aminobutyrate antiporter (503 aa).

33 to 43 contacts L-glutamate; it reads LHLVFFLLLGG. 7 helical membrane-spanning segments follow: residues 35 to 55, 153 to 173, 194 to 214, 232 to 252, 366 to 386, 407 to 427, and 440 to 460; these read LVFFLLLGGLLWFLPVALCAA, FVVGIVIPSVILFGLAAAYFI, VSTLVVFVSFILAYMGVEASA, ILLVILAISLDAIGGFSVAAV, LTVVIYLVGYLLFFIVYFVLI, IIAGIGFLLSIFALFISFVPP, and MILLISFVVTAILPFIIYELH.

Belongs to the amino acid-polyamine-organocation (APC) superfamily. Glutamate:GABA antiporter (GGA) (TC 2.A.3.7) family.

The protein localises to the cell membrane. It carries out the reaction 4-aminobutanoate(in) + L-glutamate(out) = 4-aminobutanoate(out) + L-glutamate(in). In terms of biological role, involved in glutaminase-dependent acid resistance. Exchanges extracellular glutamate (Glu) for intracellular gamma-aminobutyric acid (GABA) under acidic conditions. The chain is Glutamate/gamma-aminobutyrate antiporter from Lactococcus lactis subsp. cremoris (strain MG1363).